The chain runs to 644 residues: Kininogen-1 (644 aa).

Residues 1–18 (MKLITILFLCSRLLLSLT) form the signal peptide. Q19 carries the post-translational modification Pyrrolidone carboxylic acid; in mature form. The Cystatin kininogen-type 1 domain occupies 28-132 (CNDKDLFKAV…TQTCQITPAE (105 aa)). Disulfide bonds link C28–C614, C83–C94, C107–C126, C142–C145, C206–C218, C229–C248, C264–C267, C328–C340, and C351–C370. The N-linked (GlcNAc...) (complex) asparagine glycan is linked to N48. An O-glycosylated at one site only region spans residues 120 to 153 (SVATQTCQITPAEGPVVTAQYDCLGCVHPISTQS). One can recognise a Cystatin kininogen-type 2 domain in the interval 151–254 (TQSPDLEPIL…SQNCDIYPGK (104 aa)). N-linked (GlcNAc...) asparagine glycosylation occurs at N169. An N-linked (GlcNAc...) (complex) asparagine glycan is attached at N205. In terms of domain architecture, Cystatin kininogen-type 3 spans 273-376 (TNSPELEETL…TVNCQPLGMI (104 aa)). The N-linked (GlcNAc...) (complex) asparagine glycan is linked to N294. Position 332 is a phosphoserine; by FAM20C (S332). P383 is modified (4-hydroxyproline; partial). The disordered stretch occupies residues 387–555 (PFRSSRIGEI…TPIPSLAKPG (169 aa)). T401 carries O-linked (GalNAc...) threonine glycosylation. Over residues 418 to 434 (DSGKEQGHTRRHDWGHE) the composition is skewed to basic and acidic residues. 3 repeats span residues 420–449 (GKEQGHTRRHDWGHEKQRKHNLGHGHKHER), 450–479 (DQGHGHQRGHGLGHGHEQQHGLGHGHKFKL), and 480–510 (DDDLEHQGGHVLDHGHKHKHGHGHGKHKNKG). The segment covering 435 to 446 (KQRKHNLGHGHK) has biased composition (basic residues). Positions 477-493 (FKLDDDLEHQGGHVLDH) are enriched in basic and acidic residues. Over residues 494-518 (GHKHKHGHGHGKHKNKGKKNGKHNG) the composition is skewed to basic residues. Positions 524-539 (LASSSEDSTTPSAQTQ) are enriched in polar residues. O-linked (GalNAc...) threonine glycosylation is found at T533, T542, T546, T557, and T571. O-linked (GalNAc...) serine glycosylation is present at S577. T628 carries O-linked (GalNAc...) threonine glycosylation.

As to quaternary structure, interacts (high molecular weight kininogen) (via amino acids 402-532) with triafestin-1 and triafestin-2, anticoagulant proteins from Triatoma infestans. Interacts (high molecular weight kininogen) (via amino acids 402-532) with short form salivary protein D7R1, an anticoagulant protein from Anopheles stephensi. Interacts (high molecular weight kininogen) (via amino acids 421-466 and 459-513) with haemaphysalin, an anticoagulant protein from Haemaphysalis longicornis. In terms of processing, bradykinin is inactivated by ACE, which removes the dipeptide Arg-Phe from its C-terminus. Bradykinin is released from kininogen by plasma kallikrein. Post-translationally, hydroxylation of Pro-383 occurs prior to the release of bradykinin. In terms of processing, phosphorylated by FAM20C in the extracellular medium. N- and O-glycosylated. O-glycosylated with core 1 or possibly core 8 glycans. Post-translationally, (Microbial infection) Bradykinin is generated upon proteolytic cleavage by S.pyogenes SpeB to produce hypotension during septic shock. In terms of tissue distribution, secreted in plasma. T-kinin is detected in malignant ovarian, colon and breast carcinomas, but not in benign tumors.

Its subcellular location is the secreted. The protein localises to the extracellular space. Functionally, kininogens are inhibitors of thiol proteases. HMW-kininogen plays an important role in blood coagulation by helping to position optimally prekallikrein and factor XI next to factor XII; HMW-kininogen inhibits the thrombin- and plasmin-induced aggregation of thrombocytes. LMW-kininogen inhibits the aggregation of thrombocytes. LMW-kininogen is in contrast to HMW-kininogen not involved in blood clotting. Its function is as follows. The active peptide bradykinin is a potent vasodilatator that is released from HMW-kininogen shows a variety of physiological effects: (A) influence in smooth muscle contraction, (B) induction of hypotension, (C) natriuresis and diuresis, (D) decrease in blood glucose level, (E) it is a mediator of inflammation and causes (E1) increase in vascular permeability, (E2) stimulation of nociceptors (4E3) release of other mediators of inflammation (e.g. prostaglandins), (F) it has a cardioprotective effect (directly via bradykinin action, indirectly via endothelium-derived relaxing factor action). The sequence is that of Kininogen-1 (KNG1) from Homo sapiens (Human).